Reading from the N-terminus, the 558-residue chain is MILDILPRVGLKPKDYFLKFVLPAVLASLFMVVLGFIYFDGITRLLVLALPLLLLGGALGYPYIELDSQKQKINERLHVYITKFGVLSITDLDNKALLELLSVEKEELGQLAEESRKIYVLVKRWNQSLAGSCRFLANRTPSSQFGDFLDRMAYSIDSGQELKEFLAGEQDIVMDEYAGFYERALYSLDNFKEMYVSAITSVSFFVTFAIIAPFLLPYDFVTMVTVAIFIFMIIEVILIYSIKNKLPYDRLWHTGEKPTAIDRKLRKWLIISVGLTILASIVLFWGKYIYEAPQLLKIPYELIFSIAMTPLMLGGYMAQREESLVIRKENNFPDFLRSLGDSVSAKGGGTLESLGYLCTNDFGPLTKDLVALHRRLSIRINGQKSWKYFGHDTCSYLIQLFSEMYERCTYLGGNSGQASHIIGKNFRKILRLRRSKYQNVNQFAGVMYGLSGGMALTLFASYGVASMVNGLYSSLDIPDTMLSMVHVVAPSDFGFISYMMYGTLIIYALCSSYLIKLMDGGHYQVSLLHFSTMVWISSIVAVVTEMVTNSLLKATIPV.

The next 9 membrane-spanning stretches (helical) occupy residues F17–I37, L45–E65, V196–L216, F220–Y240, L269–I289, I298–A318, F443–G463, F495–I515, and L527–V547.

To M.jannaschii FlaJ.

It is found in the cell membrane. It localises to the archaeal flagellum. This Methanococcus voltae protein is Flagella accessory protein J (flaJ).